Here is a 1090-residue protein sequence, read N- to C-terminus: Protein CHROMATIN REMODELING 24 (1090 aa).

Disordered stretches follow at residues 1-51 and 247-273; these read MAEN…MIKL and VGKQ…NLDR. The Nuclear localization signal signature appears at 44–51; that stretch reads TKKSMIKL. The segment covering 256–273 has biased composition (basic and acidic residues); sequence RHFDDNSEDNRQGYNLDR. Residues 389–564 enclose the Helicase ATP-binding domain; that stretch reads WSLHTQGKGG…WALFNFSCPG (176 aa). Residue 402 to 409 coordinates ATP; the sequence is DDMGLGKT. The DEAH box motif lies at 515–518; that stretch reads DEGH. The Helicase C-terminal domain maps to 736-895; that stretch reads FIMSLLENLI…IRYFSQQDLR (160 aa). Residues 1043–1069 adopt a coiled-coil conformation; the sequence is DGGAKIQKQIAELTRELKDMKAAERIN.

Belongs to the SNF2/RAD54 helicase family.

The protein localises to the nucleus. In terms of biological role, DNA helicase that acts as an essential component of the spindle assembly checkpoint. Probable chromatin remodeling factor that regulate homologous recombination (HR) and non-homologous recombination (NHR). The polypeptide is Protein CHROMATIN REMODELING 24 (Arabidopsis thaliana (Mouse-ear cress)).